The primary structure comprises 61 residues: Metallothionein-2 (61 aa).

Methionine 1 is subject to N-acetylmethionine. The tract at residues 1–29 is beta; it reads MDPNCSCATDGSCSCAGSCKCKECKCTTC. Residues cysteine 5, cysteine 7, cysteine 13, cysteine 15, cysteine 19, cysteine 21, cysteine 24, cysteine 26, cysteine 29, cysteine 33, cysteine 34, cysteine 36, cysteine 37, cysteine 41, cysteine 44, cysteine 48, cysteine 50, and cysteine 57 each coordinate a divalent metal cation. The interval 30-61 is alpha; sequence KKSCCSCCPVGCAKCSQGCVCKEASDKCSCCA. Serine 58 is modified (phosphoserine). Cysteine 59 and cysteine 60 together coordinate a divalent metal cation.

Belongs to the metallothionein superfamily. Type 1 family.

In terms of biological role, metallothioneins have a high content of cysteine residues that bind various heavy metals; these proteins are transcriptionally regulated by both heavy metals and glucocorticoids. The protein is Metallothionein-2 (MT2) of Cricetulus griseus (Chinese hamster).